Consider the following 551-residue polypeptide: MEPDTTRRSACDRCRGQKLRCVRLPGPAREDSPRSARSVNQPCERCKRAKVVCYTTKPVSRRLPQSYTRRRSTAYADDVMHSEVDLDEGMIGSNRLRDEPTIKRTPPAIADRLAHDPFPTELWSGLDISHASLDSSAVLSHVPDPGNMVESVAAQRANSNTLPSHQHGWPEDPHGALNYFEERAHDLPDVMSVSSPTDVRLGLDTVDRRPAAATSRTNQAIHSDTVNMHSQAPGSGETSERGLYSRASNTVADAAQLCTTQLSELNMRLMKDIESTTSFRQGMSAASDPNYPASGLGETSPSSSMVKFTNTMLANCQSFLDILQRLRSPTVELRGSSNSECSYGDLEYSSNEYSSSRSQSRNHSTSASSRSKDGRISAGGGLQSVLNSDTIGLSPSLDPIKADSSALDFSAFLSILSCYTHILRAYDALFTEILEMLMESSCIQLDLKIHNLVPEVSLGGFRLSGHGDLQIKCLLHMSFIILEKIESMLGVNAPEKDPYGSNGGLLNNSQLRGLLEALYHQKEFDYIRADGTRAARVKKTMKSIQRILDSI.

Residues 11–53 constitute a DNA-binding region (zn(2)-C6 fungal-type); it reads CDRCRGQKLRCVRLPGPAREDSPRSARSVNQPCERCKRAKVVC. 2 disordered regions span residues 280 to 302 and 351 to 378; these read RQGMSAASDPNYPASGLGETSPS and NEYSSSRSQSRNHSTSASSRSKDGRISA. A compositionally biased stretch (low complexity) spans 351-369; it reads NEYSSSRSQSRNHSTSASS.

It is found in the nucleus. Its function is as follows. C6 finger transcription factor that positively regulates the cluster that mediates the biosynthesis of imizoquins A to D, tripeptide-derived alkaloids that serve a protective role against oxidative stress that are essential for normal germination. This Aspergillus flavus (strain ATCC 200026 / FGSC A1120 / IAM 13836 / NRRL 3357 / JCM 12722 / SRRC 167) protein is C6 finger transcription factor imqK.